The chain runs to 962 residues: UPF0182 protein SACE_1102 (962 aa).

7 helical membrane passes run 10–30 (ILLI…RLLG), 55–75 (LGLG…NLWI), 106–126 (LFGW…AQSD), 168–188 (FVAI…FGGI), 203–223 (IQLS…YFLD), 250–270 (VKLI…AAIF), and 279–299 (IATV…PALL). Disordered stretches follow at residues 707–730 (RTFW…GNQQ) and 876–916 (FGPG…EMTK). Residues 899 to 910 (GQQPPTQQPPAG) are compositionally biased toward pro residues.

This sequence belongs to the UPF0182 family.

Its subcellular location is the cell membrane. The protein is UPF0182 protein SACE_1102 of Saccharopolyspora erythraea (strain ATCC 11635 / DSM 40517 / JCM 4748 / NBRC 13426 / NCIMB 8594 / NRRL 2338).